Consider the following 197-residue polypeptide: Putative peptidyl-prolyl cis-trans isomerase (197 aa).

One can recognise a PPIase cyclophilin-type domain in the interval 14–195 (GEIKVVMHTN…HDVVIESIDV (182 aa)).

The protein belongs to the cyclophilin-type PPIase family.

The enzyme catalyses [protein]-peptidylproline (omega=180) = [protein]-peptidylproline (omega=0). In terms of biological role, PPIases accelerate the folding of proteins. It catalyzes the cis-trans isomerization of proline imidic peptide bonds in oligopeptides. In Staphylococcus aureus (strain bovine RF122 / ET3-1), this protein is Putative peptidyl-prolyl cis-trans isomerase.